A 113-amino-acid chain; its full sequence is Protein S100-A9 (113 aa).

Alanine 2 carries the post-translational modification N-acetylalanine. 2 EF-hand domains span residues 13–48 (ISTI…DLPN) and 55–90 (RNEN…LIFA). Histidine 21 provides a ligand contact to Zn(2+). Ca(2+) contacts are provided by serine 24 and histidine 29. Residue aspartate 31 coordinates Zn(2+). Ca(2+) is bound by residues threonine 32, glutamate 37, aspartate 68, asparagine 70, aspartate 72, glutamine 74, and glutamate 79. Residues histidine 92 and histidine 96 each contribute to the Zn(2+) site. Histidine 107 carries the pros-methylhistidine modification.

Homodimer. Preferentially exists as a heterodimer or heterotetramer with S100A8 known as calprotectin (S100A8/A9). S100A9 interacts with ATP2A2. S100A9 interacts with AGER, and with the heterodimeric complex formed by TLR4 and LY96 in the presence of calcium and/or zinc ions. S100A9 binds quinoline-3-carboxamides in the presence of calcium and/or zinc ions. S100A9 interacts with amyloid-beta protein 40. Calprotectin (S100A8/9) interacts with CEACAM3 and tubulin filaments in a calcium-dependent manner. Heterotetrameric calprotectin (S100A8/A9) interacts with ANXA6 and associates with tubulin filaments in activated monocytes. Calprotectin (S100A8/9) interacts with NCF2/P67PHOX, RAC1, RAC2, CYBA and CYBB. Calprotectin (S100A8/9) interacts with NOS2 to form the iNOS-S100A8/A9 transnitrosylase complex; induced by LDL(ox). Calprotectin (S100A8/9) interacts with CD69. In terms of processing, phosphorylated. Phosphorylation inhibits activation of tubulin polymerization. Methylation at His-107 by METTL9 reduces zinc-binding without affecting heterodimerization with S100A8. As to expression, highly expressed at sites of inflammation.

The protein localises to the secreted. It is found in the cytoplasm. Its subcellular location is the cytoskeleton. The protein resides in the cell membrane. Functionally, S100A9 is a calcium- and zinc-binding protein which plays a prominent role in the regulation of inflammatory processes and immune response. It can induce neutrophil chemotaxis, adhesion, can increase the bactericidal activity of neutrophils by promoting phagocytosis via activation of SYK, PI3K/AKT, and ERK1/2 and can induce degranulation of neutrophils by a MAPK-dependent mechanism. Predominantly found as calprotectin (S100A8/A9) which has a wide plethora of intra- and extracellular functions. The intracellular functions include: facilitating leukocyte arachidonic acid trafficking and metabolism, modulation of the tubulin-dependent cytoskeleton during migration of phagocytes and activation of the neutrophilic NADPH-oxidase. Also participates in regulatory T-cell differentiation together with CD69. Activates NADPH-oxidase by facilitating the enzyme complex assembly at the cell membrane, transferring arachidonic acid, an essential cofactor, to the enzyme complex and S100A8 contributes to the enzyme assembly by directly binding to NCF2/P67PHOX. The extracellular functions involve pro-inflammatory, antimicrobial, oxidant-scavenging and apoptosis-inducing activities. Its pro-inflammatory activity includes recruitment of leukocytes, promotion of cytokine and chemokine production, and regulation of leukocyte adhesion and migration. Acts as an alarmin or a danger associated molecular pattern (DAMP) molecule and stimulates innate immune cells via binding to pattern recognition receptors such as Toll-like receptor 4 (TLR4) and receptor for advanced glycation endproducts (AGER). Binding to TLR4 and AGER activates the MAP-kinase and NF-kappa-B signaling pathways resulting in the amplification of the pro-inflammatory cascade. Has antimicrobial activity towards bacteria and fungi and exerts its antimicrobial activity probably via chelation of Zn(2+) which is essential for microbial growth. Can induce cell death via autophagy and apoptosis and this occurs through the cross-talk of mitochondria and lysosomes via reactive oxygen species (ROS) and the process involves BNIP3. Can regulate neutrophil number and apoptosis by an anti-apoptotic effect; regulates cell survival via ITGAM/ITGB and TLR4 and a signaling mechanism involving MEK-ERK. Its role as an oxidant scavenger has a protective role in preventing exaggerated tissue damage by scavenging oxidants. The iNOS-S100A8/A9 transnitrosylase complex is proposed to direct selective inflammatory stimulus-dependent S-nitrosylation of multiple targets such as GAPDH, NXA5, EZR, MSN and VIM by recognizing a [IL]-x-C-x-x-[DE] motif. The protein is Protein S100-A9 (S100a9) of Rattus norvegicus (Rat).